Here is a 222-residue protein sequence, read N- to C-terminus: Cytochrome b6 (222 aa).

A helical membrane pass occupies residues 39–59 (IFYCLGGITLVCFLIQFATGF). Residue cysteine 42 participates in heme c binding. The heme b site is built by histidine 93 and histidine 107. 3 consecutive transmembrane segments (helical) span residues 97–117 (ASMM…TGGF), 123–143 (LTWV…VTGY), and 193–213 (LHTF…FLMI). 2 residues coordinate heme b: histidine 194 and histidine 209.

It belongs to the cytochrome b family. PetB subfamily. As to quaternary structure, the 4 large subunits of the cytochrome b6-f complex are cytochrome b6, subunit IV (17 kDa polypeptide, PetD), cytochrome f and the Rieske protein, while the 4 small subunits are PetG, PetL, PetM and PetN. The complex functions as a dimer. Requires heme b as cofactor. Heme c serves as cofactor.

The protein resides in the cellular thylakoid membrane. Component of the cytochrome b6-f complex, which mediates electron transfer between photosystem II (PSII) and photosystem I (PSI), cyclic electron flow around PSI, and state transitions. The chain is Cytochrome b6 from Trichodesmium erythraeum (strain IMS101).